The chain runs to 181 residues: Adenine phosphoribosyltransferase (181 aa).

Belongs to the purine/pyrimidine phosphoribosyltransferase family. As to quaternary structure, homodimer.

The protein resides in the cytoplasm. It carries out the reaction AMP + diphosphate = 5-phospho-alpha-D-ribose 1-diphosphate + adenine. The protein operates within purine metabolism; AMP biosynthesis via salvage pathway; AMP from adenine: step 1/1. Catalyzes a salvage reaction resulting in the formation of AMP, that is energically less costly than de novo synthesis. This is Adenine phosphoribosyltransferase from Methylobacterium sp. (strain 4-46).